Here is a 335-residue protein sequence, read N- to C-terminus: Corrinoid adenosyltransferase PduO (335 aa).

Heme is bound at residue His206.

Belongs to the Cob(I)alamin adenosyltransferase family. PduO subfamily. As to quaternary structure, forms a complex with PduS. It depends on heme b as a cofactor. Requires Mg(2+) as cofactor.

It localises to the bacterial microcompartment. It carries out the reaction cob(I)alamin-[corrinoid adenosyltransferase] + ATP = apo-[corrinoid adenosyltransferase] + adenosylcob(III)alamin + triphosphate. Its pathway is polyol metabolism; 1,2-propanediol degradation. It functions in the pathway cofactor biosynthesis; adenosylcobalamin biosynthesis. Functionally, converts cob(I)alamin to adenosylcobalamin (adenosylcob(III)alamin), the cofactor for propanediol dehydratase. Found in the bacterial microcompartment (BMC) dedicated to 1,2-propanediol (1,2-PD) degradation. PduS and PduO allow regeneration of the adenosylcobalamin cofactor within the BMC. In terms of biological role, expression of a cosmid containing the full 21-gene pdu operon in E.coli allows E.coli to grow on 1,2-propanediol (1,2-PD) with the appearance of bacterial microcompartments (BMC) in its cytoplasm. Its function is as follows. The 1,2-PD-specific bacterial microcompartment (BMC) concentrates low levels of 1,2-PD catabolic enzymes, concentrates volatile reaction intermediates thus enhancing pathway flux and keeps the level of toxic, mutagenic propionaldehyde low. The polypeptide is Corrinoid adenosyltransferase PduO (Citrobacter freundii).